The sequence spans 361 residues: Phospho-N-acetylmuramoyl-pentapeptide-transferase (361 aa).

A run of 10 helical transmembrane segments spans residues Leu-28–Leu-48, Thr-74–Leu-94, Ile-99–Ala-119, Ser-133–Asp-153, Leu-168–Ser-188, Val-203–Ile-223, Thr-236–Phe-256, Val-263–Ile-283, Val-288–Val-308, and Lys-338–Leu-358.

The protein belongs to the glycosyltransferase 4 family. MraY subfamily. Requires Mg(2+) as cofactor.

The protein resides in the cell inner membrane. The enzyme catalyses UDP-N-acetyl-alpha-D-muramoyl-L-alanyl-gamma-D-glutamyl-meso-2,6-diaminopimeloyl-D-alanyl-D-alanine + di-trans,octa-cis-undecaprenyl phosphate = di-trans,octa-cis-undecaprenyl diphospho-N-acetyl-alpha-D-muramoyl-L-alanyl-D-glutamyl-meso-2,6-diaminopimeloyl-D-alanyl-D-alanine + UMP. The protein operates within cell wall biogenesis; peptidoglycan biosynthesis. In terms of biological role, catalyzes the initial step of the lipid cycle reactions in the biosynthesis of the cell wall peptidoglycan: transfers peptidoglycan precursor phospho-MurNAc-pentapeptide from UDP-MurNAc-pentapeptide onto the lipid carrier undecaprenyl phosphate, yielding undecaprenyl-pyrophosphoryl-MurNAc-pentapeptide, known as lipid I. In Rickettsia canadensis (strain McKiel), this protein is Phospho-N-acetylmuramoyl-pentapeptide-transferase.